The following is a 203-amino-acid chain: Recombination protein RecR (203 aa).

The C4-type zinc finger occupies 57-72 (CARCNTFSETELCVLC). The Toprim domain maps to 80–175 (DVLCVVEMPA…SVSRIARGLP (96 aa)).

It belongs to the RecR family.

Its function is as follows. May play a role in DNA repair. It seems to be involved in an RecBC-independent recombinational process of DNA repair. It may act with RecF and RecO. The polypeptide is Recombination protein RecR (Laribacter hongkongensis (strain HLHK9)).